Consider the following 839-residue polypeptide: MGLLEKIFGTYSDREVKRIIPLVDKIDALDGSMQALSEDELKAKTAEFKQRYENGETLDDLLVEAFAVVREASSRILGLKHFREQIIGGIVLHQGRISEMKTGEGKTLVATLPSYLNAITGKGVHVVTVNDYLAKRDMEWMGQLYQYLGLTTGVIVHDLDQKQRQEAYAADITYGTNNEFGFDYLRDNMVIYKEERVQRPLHFCIVDEVDSILIDEARTPLIISGEGEKSTEFYKVADNFAKMLRKEKDFTIDEKTNSAILTDEGVEKAEKYYHIDNYADPQNMEIQHHTSQALKANYLMKRDKDYMVKEDEVVIVDEFTGRLMEGRRYSDGLHQAIEAKEGVKVQKESKTLATITFQNYFRMYEKLSGMTGTALTEEVEFREIYGLDVVVIPTHRPIARIDAPDIVYKTELGKFKAVVEDIVETNKNGQPVLVGTVSIEKSELLSSLLKKRGVRHQVLNAKYHEQEAEIISHAGEKGMVTIATNMAGRGTDIKLGEGVTDVGGLKIIGTERHESRRIDNQLRGRAGRQGDKGYSRFYVSLEDDLMRIFGSDKLKNMVEKLGLGDDDAIESKMVSSAIENAQKKVEGNNFDIRKTLIQYDDVMNKQREIIYKQRSEVLEGENLKDQIEGMIKDLIYNAVNSHISGVDEELESDIEAILNYLDDICLPRGIVEVEELATMSNDEIKEKLYSLAKEIYERKEEEFSSDQMRELERVILLRVVDTKWMDHIDSMEHLKQGIGLRAYKQQDPTQAYQMEGSDMFEEMVENIKVETVRYLFHVQAERAPERQRVVKETEINYSGPDAGDTKKEPVRRKEKKIGRNDLCPCGSGKKYKDCCGRRA.

ATP contacts are provided by residues Q85, 103 to 107, and D492; that span reads GEGKT. The segment at 794–820 is disordered; it reads EINYSGPDAGDTKKEPVRRKEKKIGRN. Residues C823, C825, C834, and C835 each contribute to the Zn(2+) site.

This sequence belongs to the SecA family. As to quaternary structure, monomer and homodimer. Part of the essential Sec protein translocation apparatus which comprises SecA, SecYEG and auxiliary proteins SecDF. Other proteins may also be involved. Zn(2+) serves as cofactor.

The protein localises to the cell membrane. It is found in the cytoplasm. It catalyses the reaction ATP + H2O + cellular proteinSide 1 = ADP + phosphate + cellular proteinSide 2.. In terms of biological role, part of the Sec protein translocase complex. Interacts with the SecYEG preprotein conducting channel. Has a central role in coupling the hydrolysis of ATP to the transfer of proteins into and across the cell membrane, serving as an ATP-driven molecular motor driving the stepwise translocation of polypeptide chains across the membrane. The chain is Protein translocase subunit SecA from Clostridium acetobutylicum (strain ATCC 824 / DSM 792 / JCM 1419 / IAM 19013 / LMG 5710 / NBRC 13948 / NRRL B-527 / VKM B-1787 / 2291 / W).